Here is a 700-residue protein sequence, read N- to C-terminus: Glutamine synthetase (700 aa).

The GS beta-grasp domain maps to tyrosine 65–glycine 155. In terms of domain architecture, GS catalytic spans aspartate 159–leucine 589. Positions 196, 198, 267, and 274 each coordinate Mg(2+). L-glutamate-binding positions include asparagine 318–glycine 319 and glycine 319. Residue histidine 323 coordinates Mg(2+). Serine 327 and arginine 435 together coordinate ATP. Arginine 435 contributes to the L-glutamate binding site. Residue glutamate 472 coordinates Mg(2+).

It belongs to the glutamine synthetase family. Homohexamer. Mg(2+) serves as cofactor.

The protein resides in the cytoplasm. It catalyses the reaction L-glutamate + NH4(+) + ATP = L-glutamine + ADP + phosphate + H(+). Its activity is regulated as follows. The activity of this enzyme is not controlled by adenylation. In terms of biological role, catalyzes the ATP-dependent biosynthesis of glutamine from glutamate and ammonia. This chain is Glutamine synthetase, found in Butyrivibrio fibrisolvens.